Reading from the N-terminus, the 264-residue chain is Shikimate dehydrogenase (NADP(+)) (264 aa).

Shikimate-binding positions include 14–16 (SVS) and Thr61. Catalysis depends on Lys65, which acts as the Proton acceptor. Asn85 and Asp99 together coordinate shikimate. NADP(+)-binding positions include 122–126 (GAGGA), 145–150 (NRTVSR), and Ala208. Residue Tyr210 participates in shikimate binding. Gly231 contacts NADP(+).

It belongs to the shikimate dehydrogenase family. Homodimer.

It catalyses the reaction shikimate + NADP(+) = 3-dehydroshikimate + NADPH + H(+). Its pathway is metabolic intermediate biosynthesis; chorismate biosynthesis; chorismate from D-erythrose 4-phosphate and phosphoenolpyruvate: step 4/7. Its function is as follows. Involved in the biosynthesis of the chorismate, which leads to the biosynthesis of aromatic amino acids. Catalyzes the reversible NADPH linked reduction of 3-dehydroshikimate (DHSA) to yield shikimate (SA). The sequence is that of Shikimate dehydrogenase (NADP(+)) from Natronomonas pharaonis (strain ATCC 35678 / DSM 2160 / CIP 103997 / JCM 8858 / NBRC 14720 / NCIMB 2260 / Gabara) (Halobacterium pharaonis).